The primary structure comprises 409 residues: NADH-quinone oxidoreductase subunit D 1 (409 aa).

The protein belongs to the complex I 49 kDa subunit family. NDH-1 is composed of 14 different subunits. Subunits NuoB, C, D, E, F, and G constitute the peripheral sector of the complex.

The protein resides in the cell inner membrane. It carries out the reaction a quinone + NADH + 5 H(+)(in) = a quinol + NAD(+) + 4 H(+)(out). Its function is as follows. NDH-1 shuttles electrons from NADH, via FMN and iron-sulfur (Fe-S) centers, to quinones in the respiratory chain. The immediate electron acceptor for the enzyme in this species is believed to be ubiquinone. Couples the redox reaction to proton translocation (for every two electrons transferred, four hydrogen ions are translocated across the cytoplasmic membrane), and thus conserves the redox energy in a proton gradient. The polypeptide is NADH-quinone oxidoreductase subunit D 1 (Solibacter usitatus (strain Ellin6076)).